The chain runs to 408 residues: ATP phosphoribosyltransferase regulatory subunit (408 aa).

It belongs to the class-II aminoacyl-tRNA synthetase family. HisZ subfamily. As to quaternary structure, heteromultimer composed of HisG and HisZ subunits.

The protein resides in the cytoplasm. Its pathway is amino-acid biosynthesis; L-histidine biosynthesis; L-histidine from 5-phospho-alpha-D-ribose 1-diphosphate: step 1/9. Its function is as follows. Required for the first step of histidine biosynthesis. May allow the feedback regulation of ATP phosphoribosyltransferase activity by histidine. The sequence is that of ATP phosphoribosyltransferase regulatory subunit from Thermosynechococcus vestitus (strain NIES-2133 / IAM M-273 / BP-1).